The primary structure comprises 209 residues: Uracil phosphoribosyltransferase (209 aa).

Residues Arg79, Arg104, and 131 to 139 (DPMLATGGS) each bind 5-phospho-alpha-D-ribose 1-diphosphate. Uracil contacts are provided by residues Ile194 and 199–201 (GDA). A 5-phospho-alpha-D-ribose 1-diphosphate-binding site is contributed by Asp200.

The protein belongs to the UPRTase family. The cofactor is Mg(2+).

It catalyses the reaction UMP + diphosphate = 5-phospho-alpha-D-ribose 1-diphosphate + uracil. Its pathway is pyrimidine metabolism; UMP biosynthesis via salvage pathway; UMP from uracil: step 1/1. Its activity is regulated as follows. Allosterically activated by GTP. Its function is as follows. Catalyzes the conversion of uracil and 5-phospho-alpha-D-ribose 1-diphosphate (PRPP) to UMP and diphosphate. The sequence is that of Uracil phosphoribosyltransferase from Clostridium tetani (strain Massachusetts / E88).